We begin with the raw amino-acid sequence, 156 residues long: uncharacterized protein (156 aa).

5 helical membrane passes run 6 to 26, 34 to 54, 68 to 88, 100 to 120, and 129 to 149; these read LIVLISFLIFYLSIFLAPYFA, FWKFISICLYAVYSLICHQMP, CARCFGIYTGVLVGMIIYPFI, WYLIIALIPMAVDGTTQLIGL, and FITGFIAGFTVVFYILPIFFE.

It localises to the cell membrane. This is an uncharacterized protein from Methanocaldococcus jannaschii (strain ATCC 43067 / DSM 2661 / JAL-1 / JCM 10045 / NBRC 100440) (Methanococcus jannaschii).